A 175-amino-acid chain; its full sequence is Myosin regulatory light chain 2, atrial isoform (175 aa).

An N-acetylalanine modification is found at alanine 2. Phosphoserine is present on residues serine 22 and serine 23. 3 consecutive EF-hand domains span residues 32–67 (AQIQEFKEAFSCIDQNRDGIICKADLRETYSQLGKV), 102–137 (DPEEAILSAFRMFDPSGKGVVNKDEFKQLLLTQADK), and 138–173 (FSPAEVEQMFALTPMDLAGNIDYKSLCYIITHGDEK). Ca(2+)-binding residues include aspartate 45, asparagine 47, aspartate 49, and aspartate 56.

Myosin is a hexamer of 2 heavy chains and 4 light chains. Predominantly expressed in adult atrial muscle.

The polypeptide is Myosin regulatory light chain 2, atrial isoform (MYL7) (Homo sapiens (Human)).